Reading from the N-terminus, the 128-residue chain is Large ribosomal subunit protein eL22 (128 aa).

This sequence belongs to the eukaryotic ribosomal protein eL22 family. In terms of assembly, component of the large ribosomal subunit.

It is found in the cytoplasm. In terms of biological role, component of the large ribosomal subunit. The ribosome is a large ribonucleoprotein complex responsible for the synthesis of proteins in the cell. In Xenopus tropicalis (Western clawed frog), this protein is Large ribosomal subunit protein eL22 (rpl22).